We begin with the raw amino-acid sequence, 157 residues long: Oleosin-B1 (157 aa).

The tract at residues 2–20 (GILRKKKHERNASFKSVLT) is polar. Positions 21–138 (SILATQAATF…AAPAAAPAAA (118 aa)) are hydrophobic. 3 helical membrane-spanning segments follow: residues 22 to 42 (ILAT…LAGT), 45 to 65 (AFIA…PAGI), and 72 to 92 (TGLA…LWLY). Repeat copies occupy residues 119–122 (PRAA), 123–126 (PAAA), 127–130 (PAAA), 131–134 (PAAA), 135–138 (PAAA), 139–142 (PAPK), 143–146 (PAAA), 147–150 (PAPK), and 151–154 (PAAP). Residues 119–122 (PRAA) are 9 X 4 AA tandem repeats of P-[AR]-[AP]-[AKP]. Residues 137-157 (AAPAPKPAAAPAPKPAAPPAL) form a disordered region. Residues 138–157 (APAPKPAAAPAPKPAAPPAL) show a composition bias toward pro residues.

It belongs to the oleosin family. The full-length protein is found in the tapetal lipid bodies of immature anthers, the proteolytically cleaved C-terminal product is found on the coats of pollen grains. Highest expression is in microspores entering and undergoing mitosis. No expression is observed in male-sterile plants, green tissues or roots.

The protein resides in the lipid droplet. Its subcellular location is the membrane. In terms of biological role, many of the major pollen coat proteins are derived from endoproteolytic cleavage of oleosin-like proteins. The sequence is that of Oleosin-B1 (OlnB1) from Brassica napus (Rape).